Here is a 664-residue protein sequence, read N- to C-terminus: uncharacterized protein (664 aa).

This is an uncharacterized protein from Sinorhizobium fredii (strain NBRC 101917 / NGR234).